The sequence spans 526 residues: Medium/long-chain-fatty-acid--[acyl-carrier-protein] ligase MbtM (526 aa).

N6-acetyllysine; by Pat is present on residues K260 and K511.

It belongs to the ATP-dependent AMP-binding enzyme family. Acetylated on Lys-511 and Lys-260 by Pat. Lys-511 is the major acetylation site. Acetylation results in the inactivation of the enzyme.

It catalyses the reaction a long-chain fatty acid + holo-[ACP] + ATP = a long-chain fatty acyl-[ACP] + AMP + diphosphate. It carries out the reaction a medium-chain fatty acid + holo-[ACP] + ATP = a medium-chain fatty acyl-[ACP] + AMP + diphosphate. The enzyme catalyses hexadecanoate + holo-[ACP] + ATP = hexadecanoyl-[ACP] + AMP + diphosphate. The catalysed reaction is hexadecanoate + ATP + H(+) = hexadecanoyl-AMP + diphosphate. It catalyses the reaction hexadecanoyl-AMP + holo-[ACP] = hexadecanoyl-[ACP] + AMP + H(+). It carries out the reaction dodecanoate + holo-[ACP] + ATP = dodecanoyl-[ACP] + AMP + diphosphate. The enzyme catalyses dodecanoate + ATP + H(+) = dodecanoyl-AMP + diphosphate. The catalysed reaction is dodecanoyl-AMP + holo-[ACP] = dodecanoyl-[ACP] + AMP + H(+). It functions in the pathway siderophore biosynthesis; mycobactin biosynthesis. Reversibly inactivated by post-translational acetylation by Pat in a cAMP-dependent manner and reactivated by Sir2 deacylase. Its function is as follows. Activates lipidic moieties required for mycobactin biosynthesis. Converts medium- to long-chain aliphatic fatty acids into acyl adenylate, which is further transferred on to the phosphopantetheine arm of the carrier protein MbtL. Shows a strong preference for palmitic acid (C16) and cannot use short-chain fatty acids. Proceeds via a Bi Uni Uni Bi ping-pong mechanism. During the first half-reaction (adenylation), fatty acid binds first to the free enzyme, followed by ATP and the release of pyrophosphate to form the adenylate intermediate. During the second half-reaction (ligation), holo-MbtL binds to the enzyme followed by the release of products AMP and acylated MbtL. This chain is Medium/long-chain-fatty-acid--[acyl-carrier-protein] ligase MbtM, found in Mycolicibacterium smegmatis (strain ATCC 700084 / mc(2)155) (Mycobacterium smegmatis).